Reading from the N-terminus, the 232-residue chain is Triosephosphate isomerase (232 aa).

Position 6-8 (asparagine 6–lysine 8) interacts with substrate. Catalysis depends on histidine 90, which acts as the Electrophile. The active-site Proton acceptor is the glutamate 159. Positions 165 and 195 each coordinate substrate.

This sequence belongs to the triosephosphate isomerase family. In terms of assembly, homodimer.

It localises to the cytoplasm. It catalyses the reaction D-glyceraldehyde 3-phosphate = dihydroxyacetone phosphate. The protein operates within carbohydrate biosynthesis; gluconeogenesis. Its pathway is carbohydrate degradation; glycolysis; D-glyceraldehyde 3-phosphate from glycerone phosphate: step 1/1. In terms of biological role, involved in the gluconeogenesis. Catalyzes stereospecifically the conversion of dihydroxyacetone phosphate (DHAP) to D-glyceraldehyde-3-phosphate (G3P). The chain is Triosephosphate isomerase from Wolinella succinogenes (strain ATCC 29543 / DSM 1740 / CCUG 13145 / JCM 31913 / LMG 7466 / NCTC 11488 / FDC 602W) (Vibrio succinogenes).